The sequence spans 475 residues: Adenosylhomocysteinase (475 aa).

The substrate site is built by threonine 66, aspartate 141, and glutamate 201. NAD(+) is bound at residue 202–204; the sequence is TTT. Residues lysine 231 and aspartate 235 each contribute to the substrate site. Residues asparagine 236, 265 to 270, glutamate 288, asparagine 323, 344 to 346, and asparagine 389 each bind NAD(+); these read GYGEVG and IGH.

It belongs to the adenosylhomocysteinase family. Requires NAD(+) as cofactor.

It localises to the cytoplasm. The catalysed reaction is S-adenosyl-L-homocysteine + H2O = L-homocysteine + adenosine. It functions in the pathway amino-acid biosynthesis; L-homocysteine biosynthesis; L-homocysteine from S-adenosyl-L-homocysteine: step 1/1. Its function is as follows. May play a key role in the regulation of the intracellular concentration of adenosylhomocysteine. This is Adenosylhomocysteinase from Geobacter sulfurreducens (strain ATCC 51573 / DSM 12127 / PCA).